We begin with the raw amino-acid sequence, 754 residues long: Lysyl oxidase homolog 3 (754 aa).

Residues 1–26 form the signal peptide; the sequence is MRAVSVWYCCPWGLLLLHCLCSFSVG. SRCR domains are found at residues 45–146, 170–283, 308–408, and 418–526; these read FRLA…VICK, VRLR…VSCV, VRLK…VRCN, and IRLS…VICS. Intrachain disulfides connect C71–C135, C84–C145, C115–C125, C202–C272, C215–C282, C249–C259, C333–C397, C346–C407, C377–C387, C447–C512, C460–C525, C493–C503, C555–C561, C607–C655, C639–C645, C667–C677, and C714–C728. N112 carries an N-linked (GlcNAc...) asparagine glycan. Residue N267 is glycosylated (N-linked (GlcNAc...) asparagine). Residues N391 and N482 are each glycosylated (N-linked (GlcNAc...) asparagine). Residues 530–733 form a lysyl-oxidase like region; it reads SDLLLHSALV…WVHNCHIGDA (204 aa). Cu cation is bound by residues H608, H610, and H612. N-linked (GlcNAc...) asparagine glycosylation occurs at N626. A cross-link (lysine tyrosylquinone (Lys-Tyr)) is located at residues 635-671; sequence KASFCLEDTECQEDVSKRYECANFGEQGITVGCWDLY. Y671 carries the post-translational modification 2',4',5'-topaquinone.

This sequence belongs to the lysyl oxidase family. The cofactor is Cu cation. Lysine tyrosylquinone residue serves as cofactor. Post-translationally, the lysine tyrosylquinone cross-link (LTQ) is generated by condensation of the epsilon-amino group of a lysine with a topaquinone produced by oxidation of tyrosine. As to expression, expressed in palate: predominantly present in the palate mesenchyme and tongue (at protein level). In spine, expressed in the original intervertebral disk, cartilage primordia, anterior and posterior longitudinal ligaments, meninges of spinal cord, lung and heart. In eyes, strongly expressed in the skin of the eyelid and weakly expressed in the cornea and sclera. In lung, predominantly expressed in the pulmonary mesenchyme. In developing muscle, expressed at myofiber ends (at protein level).

It localises to the secreted. It is found in the extracellular space. The protein resides in the cytoplasm. The protein localises to the nucleus. The enzyme catalyses L-lysyl-[protein] + O2 + H2O = (S)-2-amino-6-oxohexanoyl-[protein] + H2O2 + NH4(+). It carries out the reaction N(6)-acetyl-L-lysyl-[protein] + O2 + H2O = acetamide + (S)-2-amino-6-oxohexanoyl-[protein] + H2O2. In terms of biological role, protein-lysine 6-oxidase that mediates the oxidation of peptidyl lysine residues to allysine in target proteins. Catalyzes the post-translational oxidative deamination of peptidyl lysine residues in precursors of elastin and different types of collagens, a prerequisite in the formation of cross-links between collagens and elastin. Required for somite boundary formation by catalyzing oxidation of fibronectin (FN1), enhancing integrin signaling in myofibers and their adhesion to the myotendinous junction (MTJ). Acts as a regulator of inflammatory response by inhibiting differentiation of naive CD4(+) T-cells into T-helper Th17 or regulatory T-cells (Treg): acts by interacting with STAT3 in the nucleus and catalyzing both deacetylation and oxidation of lysine residues on STAT3, leading to disrupt STAT3 dimerization and inhibit STAT3 transcription activity. Oxidation of lysine residues to allysine on STAT3 preferentially takes place on lysine residues that are acetylated. Also able to catalyze deacetylation of lysine residues on STAT3. The polypeptide is Lysyl oxidase homolog 3 (Mus musculus (Mouse)).